A 245-amino-acid chain; its full sequence is 1-(5-phosphoribosyl)-5-[(5-phosphoribosylamino)methylideneamino] imidazole-4-carboxamide isomerase (245 aa).

The active-site Proton acceptor is the Asp7. The Proton donor role is filled by Asp129.

It belongs to the HisA/HisF family.

The protein resides in the cytoplasm. The catalysed reaction is 1-(5-phospho-beta-D-ribosyl)-5-[(5-phospho-beta-D-ribosylamino)methylideneamino]imidazole-4-carboxamide = 5-[(5-phospho-1-deoxy-D-ribulos-1-ylimino)methylamino]-1-(5-phospho-beta-D-ribosyl)imidazole-4-carboxamide. The protein operates within amino-acid biosynthesis; L-histidine biosynthesis; L-histidine from 5-phospho-alpha-D-ribose 1-diphosphate: step 4/9. The protein is 1-(5-phosphoribosyl)-5-[(5-phosphoribosylamino)methylideneamino] imidazole-4-carboxamide isomerase of Alteromonas mediterranea (strain DSM 17117 / CIP 110805 / LMG 28347 / Deep ecotype).